We begin with the raw amino-acid sequence, 214 residues long: MRAELAVYFIAGTQDIVRGTLPSVLEEALKGGITCFQYREKGAGSLQTASERKEMALECQKLCAKYQVPFIINDDVALALEIGADGIHVGQTDEAIRQVIASCSGKMKIGLSVHSVSEAKEAERLGAVDYIGVGPIFPTISKADAEPVSGTAILEEIRRAGITIPIVGIGGINETNSAEVLTAGADGVSVISAITQSDDCHSVIKQLKNPGSPS.

Residues 37–41 and asparagine 73 each bind 4-amino-2-methyl-5-(diphosphooxymethyl)pyrimidine; that span reads QYREK. Aspartate 74 and aspartate 93 together coordinate Mg(2+). 4-amino-2-methyl-5-(diphosphooxymethyl)pyrimidine is bound at residue serine 112. 2-[(2R,5Z)-2-carboxy-4-methylthiazol-5(2H)-ylidene]ethyl phosphate is bound at residue 139 to 141; the sequence is TIS. Position 142 (lysine 142) interacts with 4-amino-2-methyl-5-(diphosphooxymethyl)pyrimidine. 2-[(2R,5Z)-2-carboxy-4-methylthiazol-5(2H)-ylidene]ethyl phosphate is bound by residues glycine 171 and 191–192; that span reads IS.

Belongs to the thiamine-phosphate synthase family. The cofactor is Mg(2+).

The enzyme catalyses 2-[(2R,5Z)-2-carboxy-4-methylthiazol-5(2H)-ylidene]ethyl phosphate + 4-amino-2-methyl-5-(diphosphooxymethyl)pyrimidine + 2 H(+) = thiamine phosphate + CO2 + diphosphate. It catalyses the reaction 2-(2-carboxy-4-methylthiazol-5-yl)ethyl phosphate + 4-amino-2-methyl-5-(diphosphooxymethyl)pyrimidine + 2 H(+) = thiamine phosphate + CO2 + diphosphate. It carries out the reaction 4-methyl-5-(2-phosphooxyethyl)-thiazole + 4-amino-2-methyl-5-(diphosphooxymethyl)pyrimidine + H(+) = thiamine phosphate + diphosphate. It participates in cofactor biosynthesis; thiamine diphosphate biosynthesis; thiamine phosphate from 4-amino-2-methyl-5-diphosphomethylpyrimidine and 4-methyl-5-(2-phosphoethyl)-thiazole: step 1/1. In terms of biological role, condenses 4-methyl-5-(beta-hydroxyethyl)thiazole monophosphate (THZ-P) and 2-methyl-4-amino-5-hydroxymethyl pyrimidine pyrophosphate (HMP-PP) to form thiamine monophosphate (TMP). In Listeria monocytogenes serovar 1/2a (strain ATCC BAA-679 / EGD-e), this protein is Thiamine-phosphate synthase.